A 284-amino-acid polypeptide reads, in one-letter code: Phosphatidylglycerol--prolipoprotein diacylglyceryl transferase (284 aa).

A run of 7 helical transmembrane segments spans residues 18 to 38, 62 to 82, 106 to 126, 136 to 156, 190 to 210, 218 to 238, and 252 to 272; these read LGGIEVHWYGLAYACAIVIAF, YFLWAELGIVLGARIGYVLIY, FVGIRGMSYHGGLVGFLIASY, LLIYLDLIAISLPLGYVFGRI, PSQLIEAFLEGVIVFLMVLWA, GLLIVVYGLGYSLMRFIAEFY, and LSMGQILSLFMVVVSLGILLY. Arginine 155 lines the a 1,2-diacyl-sn-glycero-3-phospho-(1'-sn-glycerol) pocket.

Belongs to the Lgt family.

The protein localises to the cell inner membrane. The catalysed reaction is L-cysteinyl-[prolipoprotein] + a 1,2-diacyl-sn-glycero-3-phospho-(1'-sn-glycerol) = an S-1,2-diacyl-sn-glyceryl-L-cysteinyl-[prolipoprotein] + sn-glycerol 1-phosphate + H(+). The protein operates within protein modification; lipoprotein biosynthesis (diacylglyceryl transfer). Catalyzes the transfer of the diacylglyceryl group from phosphatidylglycerol to the sulfhydryl group of the N-terminal cysteine of a prolipoprotein, the first step in the formation of mature lipoproteins. The polypeptide is Phosphatidylglycerol--prolipoprotein diacylglyceryl transferase (Helicobacter pylori (strain G27)).